Consider the following 293-residue polypeptide: 1D-myo-inositol 2-acetamido-2-deoxy-alpha-D-glucopyranoside deacetylase 2 (293 aa).

Positions 6, 9, and 142 each coordinate Zn(2+).

This sequence belongs to the MshB deacetylase family. Zn(2+) serves as cofactor.

The enzyme catalyses 1D-myo-inositol 2-acetamido-2-deoxy-alpha-D-glucopyranoside + H2O = 1D-myo-inositol 2-amino-2-deoxy-alpha-D-glucopyranoside + acetate. Catalyzes the deacetylation of 1D-myo-inositol 2-acetamido-2-deoxy-alpha-D-glucopyranoside (GlcNAc-Ins) in the mycothiol biosynthesis pathway. This Frankia alni (strain DSM 45986 / CECT 9034 / ACN14a) protein is 1D-myo-inositol 2-acetamido-2-deoxy-alpha-D-glucopyranoside deacetylase 2.